We begin with the raw amino-acid sequence, 599 residues long: Serine/threonine-protein kinase haspin homolog (599 aa).

The 313-residue stretch at 287 to 599 (PESIVKIGEG…FSDMLMDQIS (313 aa)) folds into the Protein kinase domain. Residues 293–301 (IGEGTYGEA), K310, 407–412 (EHGGKD), 448–453 (DLHWGN), and 486–488 (DFT) contribute to the ATP site. D448 (proton acceptor) is an active-site residue.

It belongs to the protein kinase superfamily. Ser/Thr protein kinase family. Haspin subfamily. Expressed in meristems and primordia of root tips, lateral roots, shoot apex, leaves and flowers.

The protein resides in the cytoplasm. It is found in the perinuclear region. Its subcellular location is the nucleus. It localises to the chromosome. The protein localises to the cytoskeleton. The protein resides in the phragmoplast. It catalyses the reaction L-seryl-[protein] + ATP = O-phospho-L-seryl-[protein] + ADP + H(+). The enzyme catalyses L-threonyl-[protein] + ATP = O-phospho-L-threonyl-[protein] + ADP + H(+). Functionally, threonine-protein kinase that phosphorylates histone H3 in vitro at 'Thr-3' (H3T3ph) and 'Thr-11' (H3T11ph), but not at 'Ser-10' (H3S10ph) or 'Ser-28' (H3S28ph). Plays a role in mitotic cell division during plant growth. Threonine-protein kinase that phosphorylates histone H3 in vitro at 'Thr-3' (H3T3ph), but not at 'Thr-11' (H3T11ph), 'Ser-10' (H3S10ph) or 'Ser-28' (H3S28ph). Involved in histone H3 phosphorylation in mitotic cells. Contributes to organ and plant development, as well as embryonic patterning. This is Serine/threonine-protein kinase haspin homolog from Arabidopsis thaliana (Mouse-ear cress).